A 311-amino-acid chain; its full sequence is 4-diphosphocytidyl-2-C-methyl-D-erythritol kinase (311 aa).

Lys-11 is a catalytic residue. 94 to 104 contacts ATP; that stretch reads PVAAGLAGGSA. The active site involves Asp-136.

It belongs to the GHMP kinase family. IspE subfamily.

The catalysed reaction is 4-CDP-2-C-methyl-D-erythritol + ATP = 4-CDP-2-C-methyl-D-erythritol 2-phosphate + ADP + H(+). Its pathway is isoprenoid biosynthesis; isopentenyl diphosphate biosynthesis via DXP pathway; isopentenyl diphosphate from 1-deoxy-D-xylulose 5-phosphate: step 3/6. In terms of biological role, catalyzes the phosphorylation of the position 2 hydroxy group of 4-diphosphocytidyl-2C-methyl-D-erythritol. This Synechococcus sp. (strain JA-2-3B'a(2-13)) (Cyanobacteria bacterium Yellowstone B-Prime) protein is 4-diphosphocytidyl-2-C-methyl-D-erythritol kinase.